The following is a 401-amino-acid chain: Argininosuccinate synthase (401 aa).

ATP is bound by residues 11–19 (AYSGGLDTS) and Ala-38. Residues Tyr-89 and Ser-94 each coordinate L-citrulline. Gly-119 contributes to the ATP binding site. Residues Thr-121, Asn-125, and Asp-126 each coordinate L-aspartate. Residue Asn-125 participates in L-citrulline binding. Arg-129, Ser-177, Ser-186, Glu-262, and Tyr-274 together coordinate L-citrulline.

Belongs to the argininosuccinate synthase family. Type 1 subfamily. As to quaternary structure, homotetramer.

Its subcellular location is the cytoplasm. The enzyme catalyses L-citrulline + L-aspartate + ATP = 2-(N(omega)-L-arginino)succinate + AMP + diphosphate + H(+). It participates in amino-acid biosynthesis; L-arginine biosynthesis; L-arginine from L-ornithine and carbamoyl phosphate: step 2/3. This is Argininosuccinate synthase from Nitratidesulfovibrio vulgaris (strain DSM 19637 / Miyazaki F) (Desulfovibrio vulgaris).